A 202-amino-acid polypeptide reads, in one-letter code: uncharacterized protein (202 aa).

3 helical membrane passes run 34 to 54, 102 to 122, and 125 to 145; these read AAYV…QARI, MGVA…PLVI, and ILPL…FNKA. The tract at residues 165–202 is disordered; the sequence is NKPAAAVTGTSSNSNNASAKSDGPTITELNENETEKSS. Low complexity predominate over residues 168-185; it reads AAAVTGTSSNSNNASAKS. Phosphoserine is present on residues serine 185 and serine 201.

It belongs to the PHO88 family.

It is found in the endoplasmic reticulum membrane. This is an uncharacterized protein from Schizosaccharomyces pombe (strain 972 / ATCC 24843) (Fission yeast).